The sequence spans 177 residues: Dual-action ribosomal maturation protein DarP (177 aa).

The interval methionine 1–aspartate 26 is disordered.

This sequence belongs to the DarP family.

It localises to the cytoplasm. Functionally, member of a network of 50S ribosomal subunit biogenesis factors which assembles along the 30S-50S interface, preventing incorrect 23S rRNA structures from forming. Promotes peptidyl transferase center (PTC) maturation. This is Dual-action ribosomal maturation protein DarP from Shewanella sp. (strain MR-4).